The sequence spans 226 residues: Ribose-5-phosphate isomerase A (226 aa).

Residues 33–36 (TGST), 86–89 (DGAD), and 99–102 (KGGG) contribute to the substrate site. Residue E108 is the Proton acceptor of the active site. A substrate-binding site is contributed by K126.

It belongs to the ribose 5-phosphate isomerase family. Homodimer.

It catalyses the reaction aldehydo-D-ribose 5-phosphate = D-ribulose 5-phosphate. It functions in the pathway carbohydrate degradation; pentose phosphate pathway; D-ribose 5-phosphate from D-ribulose 5-phosphate (non-oxidative stage): step 1/1. Its function is as follows. Catalyzes the reversible conversion of ribose-5-phosphate to ribulose 5-phosphate. In Bordetella bronchiseptica (strain ATCC BAA-588 / NCTC 13252 / RB50) (Alcaligenes bronchisepticus), this protein is Ribose-5-phosphate isomerase A.